Here is a 1452-residue protein sequence, read N- to C-terminus: Arf-GAP with Rho-GAP domain, ANK repeat and PH domain-containing protein 1 (1452 aa).

Residues 6–70 (DAALSVAEWL…LAGLHRAHAP (65 aa)) form the SAM domain. Residues 81–90 (PVPMKRHIFR) form a required for interaction with SH3KBP1 region. Disordered stretches follow at residues 87–258 (HIFR…LPSR) and 271–304 (EGEE…LNPP). Composition is skewed to pro residues over residues 92–104 (PPVP…PPPT), 154–167 (SVPP…PPYP), and 205–225 (PLQP…PPRL). 2 stretches are compositionally biased toward acidic residues: residues 228 to 239 (EFDDSDYDDVPE) and 271 to 286 (EGEE…DDDH). Residue serine 232 is modified to Phosphoserine. Position 234 is a phosphotyrosine; by PTK6 (tyrosine 234). Residues 329-421 (PVIKAGWLDK…WMQALQQAVV (93 aa)) enclose the PH 1 domain. Position 430 is a phosphoserine (serine 430). A PH 2 domain is found at 442–531 (QPDRAGSLEL…WLEAMQGAIA (90 aa)). Tyrosine 506 carries the post-translational modification Phosphotyrosine. The Arf-GAP domain maps to 537–662 (SEVAERIWAA…RYHPLFGNQE (126 aa)). The C4-type zinc finger occupies 552–575 (CADCGAAQPDWASINLCVVICKRC). A Phosphoserine modification is found at serine 740. The 108-residue stretch at 745–852 (TVSHSGFLYK…WVKCIAKAFV (108 aa)) folds into the PH 3 domain. Residues 956-1141 (ASLGDTLSEQ…DLINHYVVVF (186 aa)) enclose the Rho-GAP domain. Residues 1174–1263 (GDFICTVYLE…SHLVVKKYQS (90 aa)) enclose the Ras-associating domain. The PH 4 domain occupies 1276–1398 (GDTKHGMMKF…WFATFLSVQH (123 aa)). Phosphoserine is present on residues serine 1430 and serine 1437.

As to quaternary structure, interacts with SH3KBP1/CIN85 (via SH3 domains). The interaction is independent of EGF and does not affect ARAP1 GTPase-activating activity but is involved in regulating ubiquitination and endocytic trafficking of EGFR. ARAP1 competes with E3 ubiquitin-protein ligase CBL for binding to SH3KBP1, preventing interaction of CBL with SH3KBP1; this is likely to regulate SH3KBP1-mediated internalization of EGFR. Interacts with TNFRSF10A. Post-translationally, phosphorylated by PTK6 following EGF stimulation which enhances EGFR signaling by delaying EGFR down-regulation; the interaction is mediated by the SH2 domain of PTK6. Phosphorylation promotes association with the Golgi apparatus and endosomes. As to expression, expressed in the retina where it is detected in Mueller glia (at protein level). Also detected in the retinal pigment epithelium (at protein level). Expressed in osteoclasts (at protein level).

The protein localises to the cytoplasm. It is found in the golgi apparatus. The protein resides in the trans-Golgi network. Its subcellular location is the golgi stack membrane. It localises to the cell membrane. The protein localises to the endosome. It is found in the multivesicular body. The protein resides in the cell projection. Its subcellular location is the ruffle. It localises to the podosome. The protein localises to the early endosome. In terms of biological role, phosphatidylinositol 3,4,5-trisphosphate-dependent GTPase-activating protein that modulates actin cytoskeleton remodeling by regulating ARF and RHO family members. Activated by phosphatidylinositol 3,4,5-trisphosphate (PtdIns(3,4,5)P3) binding and, to a lesser extent, by phosphatidylinositol 3,4-bisphosphate (PtdIns(3,4)P2) binding. Has a preference for ARF1 and ARF5. Positively regulates the ring size of circular dorsal ruffles and promotes macropinocytosis. Acts as a bridging factor in osteoclasts to control actin and membrane dynamics. Regulates the condensing of osteoclast podosomes into sealing zones which segregate the bone-facing membrane from other membrane domains and are required for osteoclast resorption activity. Also regulates recruitment of the AP-3 complex to endosomal membranes and trafficking of lysosomal membrane proteins to the ruffled membrane border of osteoclasts to modulate bone resorption. Regulates the endocytic trafficking of EGFR. Regulates the incorporation of CD63 and CD9 into multivesicular bodies. Required in the retinal pigment epithelium (RPE) for photoreceptor survival due to its role in promoting RPE phagocytosis. This chain is Arf-GAP with Rho-GAP domain, ANK repeat and PH domain-containing protein 1, found in Mus musculus (Mouse).